We begin with the raw amino-acid sequence, 356 residues long: Peptide chain release factor 1 (356 aa).

Gln233 carries the post-translational modification N5-methylglutamine.

The protein belongs to the prokaryotic/mitochondrial release factor family. Post-translationally, methylated by PrmC. Methylation increases the termination efficiency of RF1.

It is found in the cytoplasm. In terms of biological role, peptide chain release factor 1 directs the termination of translation in response to the peptide chain termination codons UAG and UAA. The polypeptide is Peptide chain release factor 1 (Endomicrobium trichonymphae).